Consider the following 308-residue polypeptide: MSNATKFGKVAVLLGGKSAERAVSLDSGQAVLDALLRSGVQAEAFDPQNRSVTELVNYDRAFIVLHGRGGEDGQIQGVLEWLNIPYTGTGVQGSAIGMDKVKTKQIWQGSDLPTAPYRIITKETDLDSVIAELGLPVIIKPVHEGSSVGMSKVEKAEDFAAAIEKATQHDAVVMAEKWITGREFTISFLNGQPLPVIRLQPPADVAFYDYEAKYQRNDVEYGIPCGLSETEEKKLQALCLRAFQAVGAEGWGRIDAMQDEQGNFWLLEVNTVPGMTSHSLVPKAAKAVGYSFDELCVAILDQTLEGTA.

In terms of domain architecture, ATP-grasp spans 104 to 301 (KQIWQGSDLP…FDELCVAILD (198 aa)). 130 to 185 (IAELGLPVIIKPVHEGSSVGMSKVEKAEDFAAAIEKATQHDAVVMAEKWITGREFT) contributes to the ATP binding site. Positions 255, 268, and 270 each coordinate Mg(2+).

The protein belongs to the D-alanine--D-alanine ligase family. Requires Mg(2+) as cofactor. Mn(2+) serves as cofactor.

Its subcellular location is the cytoplasm. It carries out the reaction 2 D-alanine + ATP = D-alanyl-D-alanine + ADP + phosphate + H(+). It functions in the pathway cell wall biogenesis; peptidoglycan biosynthesis. In terms of biological role, cell wall formation. This Acinetobacter baumannii (strain AB307-0294) protein is D-alanine--D-alanine ligase.